A 439-amino-acid chain; its full sequence is MRLSRFFLPILKETPKEAEIVSHRLMLRAGMMRQEAAGIYAWLPLGLRVLKKIEQIVREEQNRAGAIECLMPTLQLADLWRESGRYDAYGPEMLRITDRHKRELLYGPTNEEMITEIFRAYVRSYKNLPLNLYHIQWKFRDEQRPRFGVMRGREFLMKDAYSFDIDEAAARKSYNRMFVAYLRTFARMGLKAIPMRAETGPIGGDLSHEFIVLAETGESGVFCDSDVLNLPVPGDDVDYDGDLTPIIKQWTSVYAATEDVHDAERFEREVPADKKLNTRGIEVGQIFYFGTKYSDKMKALVAGPDGVDVPVHGGSYGVGVSRLVGAIIEACHDENGIKWPEEVAPFRAAILNLKQGSADTDAACEALYKELSAKGVDVLYDDTDQRAGGKFATADLIGIPWQILVGPKGLAEGKVELKRRADGSRENVTPAEAVARLTT.

This sequence belongs to the class-II aminoacyl-tRNA synthetase family. ProS type 2 subfamily. In terms of assembly, homodimer.

It localises to the cytoplasm. It catalyses the reaction tRNA(Pro) + L-proline + ATP = L-prolyl-tRNA(Pro) + AMP + diphosphate. In terms of biological role, catalyzes the attachment of proline to tRNA(Pro) in a two-step reaction: proline is first activated by ATP to form Pro-AMP and then transferred to the acceptor end of tRNA(Pro). This is Proline--tRNA ligase from Rhodopseudomonas palustris (strain BisB18).